A 534-amino-acid chain; its full sequence is Probable alanine aminotransferase, mitochondrial (534 aa).

Residues 1–18 (MFKRSLKVLLSNPPINRV) constitute a mitochondrion transit peptide. An N6-(pyridoxal phosphate)lysine modification is found at K352.

The protein belongs to the class-I pyridoxal-phosphate-dependent aminotransferase family. Alanine aminotransferase subfamily. As to quaternary structure, homodimer. Pyridoxal 5'-phosphate is required as a cofactor.

The protein localises to the mitochondrion matrix. It carries out the reaction L-alanine + 2-oxoglutarate = pyruvate + L-glutamate. Its pathway is amino-acid degradation; L-alanine degradation via transaminase pathway; pyruvate from L-alanine: step 1/1. The sequence is that of Probable alanine aminotransferase, mitochondrial (gpt) from Dictyostelium discoideum (Social amoeba).